A 348-amino-acid chain; its full sequence is MEENKQKALSAAVSQIERQFGKGSVMRMGDSTVSRDIEAISTGSLGLDIALGIGGLPKGRIVEIYGPESSGKTTLTLQVIAECQKMGGTAAFIDAEHALDPSYAQKLGVKVDELLVSQPDTGEQALEITDMLVRSAAVDVVIIDSVAALTPKAEIEGEMGDSHVGLQARLMSQALRKLTANIKRSNTLVIFINQIRMKIGVMFGSPETTTGGNALKFYASVRLDIRRIGSIKKGEEILGSETRVKVVKNKVAPPFKMTEFDILYNEGISRESEIINLGVQLNLIEKSGAWYSYKQEKIGQGKENVRLYLKENPQVAAELEQQIRTELLEKKLSVLASSSEDLFETIDD.

66–73 (GPESSGKT) contributes to the ATP binding site.

It belongs to the RecA family.

It is found in the cytoplasm. Its function is as follows. Can catalyze the hydrolysis of ATP in the presence of single-stranded DNA, the ATP-dependent uptake of single-stranded DNA by duplex DNA, and the ATP-dependent hybridization of homologous single-stranded DNAs. It interacts with LexA causing its activation and leading to its autocatalytic cleavage. This Legionella pneumophila protein is Protein RecA.